Consider the following 291-residue polypeptide: Elongation factor Ts (291 aa).

Residues 79–82 (TDFV) form an involved in Mg(2+) ion dislocation from EF-Tu region.

The protein belongs to the EF-Ts family.

It localises to the cytoplasm. Functionally, associates with the EF-Tu.GDP complex and induces the exchange of GDP to GTP. It remains bound to the aminoacyl-tRNA.EF-Tu.GTP complex up to the GTP hydrolysis stage on the ribosome. This Ruegeria pomeroyi (strain ATCC 700808 / DSM 15171 / DSS-3) (Silicibacter pomeroyi) protein is Elongation factor Ts.